A 103-amino-acid polypeptide reads, in one-letter code: Large ribosomal subunit protein bL21 (103 aa).

Belongs to the bacterial ribosomal protein bL21 family. In terms of assembly, part of the 50S ribosomal subunit. Contacts protein L20.

This protein binds to 23S rRNA in the presence of protein L20. The chain is Large ribosomal subunit protein bL21 from Rhodococcus erythropolis (strain PR4 / NBRC 100887).